Consider the following 131-residue polypeptide: uncharacterized protein (131 aa).

Residues 101–131 are disordered; that stretch reads SWWPPSGVVRGGPSSWPPSGVAEPREALGLP.

This is an uncharacterized protein from Homo sapiens (Human).